We begin with the raw amino-acid sequence, 587 residues long: Xyloglucan-specific endo-beta-1,4-glucanase BoGH9A (587 aa).

The first 19 residues, 1-19, serve as a signal peptide directing secretion; it reads MKIVRYIALFGILSGLAVA. The N-palmitoyl cysteine moiety is linked to residue Cys20. A lipid anchor (S-diacylglycerol cysteine) is attached at Cys20. The active-site Nucleophile is Asp185. Catalysis depends on residues His511 and Asp553. The active-site Proton donor is Glu562.

This sequence belongs to the glycosyl hydrolase 9 (cellulase E) family.

It is found in the cell outer membrane. It carries out the reaction xyloglucan + H2O = xyloglucan oligosaccharides.. Its pathway is glucan metabolism; xyloglucan degradation. Its function is as follows. Catalyzes endohydrolysis of 1,4-beta-D-glucosidic linkages in xyloglucan with retention of the beta-configuration of the glycosyl residues in xyloglucan degradation. Cleaves the backbone of the 3 major types of natural xyloglucans (seed galactoxyloglucan from tamarind kernel, dicot fucogalactoxyloglucan from lettuce leaves, and solanaceous arabinogalactoxyloglucan from tomato fruit), to produce xyloglucan oligosaccharides. May be superfluous in xyloglucan degradation compared to BoGH5A (AC A7LXT7), the other Xyloglucan-specific endo-beta-1,4-glucanase. This Bacteroides ovatus (strain ATCC 8483 / DSM 1896 / JCM 5824 / BCRC 10623 / CCUG 4943 / NCTC 11153) protein is Xyloglucan-specific endo-beta-1,4-glucanase BoGH9A.